Reading from the N-terminus, the 300-residue chain is HTH-type transcriptional regulator ArgP (300 aa).

Residues 4 to 60 (FDYKLLAALAAVVEQGGFERAAQALGLSQSAVSQRIKLLEARVGQPVLVRETPPHPT) enclose the HTH lysR-type domain. Positions 21 to 40 (FERAAQALGLSQSAVSQRIK) form a DNA-binding region, H-T-H motif.

It belongs to the LysR transcriptional regulatory family. Homodimer.

Functionally, controls the transcription of genes involved in arginine and lysine metabolism. This chain is HTH-type transcriptional regulator ArgP, found in Pseudomonas aeruginosa (strain UCBPP-PA14).